A 775-amino-acid polypeptide reads, in one-letter code: Endothelin-converting enzyme-like 1 (775 aa).

The Cytoplasmic portion of the chain corresponds to 1 to 61 (MEAPYSMTAH…LPRWNRREVC (61 aa)). The segment at 30–52 (GTSLPPGFPRGSGRSASGSRSGL) is disordered. Residues 32–52 (SLPPGFPRGSGRSASGSRSGL) show a composition bias toward low complexity. The helical; Signal-anchor for type II membrane protein transmembrane segment at 62 to 82 (LLSGLVFAAGLCAILAAMLAL) threads the bilayer. Over 83–775 (KYLGPGAAGG…MNPVHKCSVW (693 aa)) the chain is Lumenal. In terms of domain architecture, Peptidase M13 spans 99–775 (GCPERKAFAR…MNPVHKCSVW (677 aa)). 4 disulfides stabilise this stretch: Cys124–Cys760, Cys132–Cys720, Cys188–Cys441, and Cys649–Cys772. N-linked (GlcNAc...) asparagine glycans are attached at residues Asn255 and Asn322. Residue His612 participates in Zn(2+) binding. Glu613 is an active-site residue. His616 is a binding site for Zn(2+). N-linked (GlcNAc...) asparagine glycosylation occurs at Asn656. Zn(2+) is bound at residue Glu672. The active-site Proton donor is the Asp676.

Belongs to the peptidase M13 family. The cofactor is Zn(2+).

It is found in the membrane. May contribute to the degradation of peptide hormones and be involved in the inactivation of neuronal peptides. This is Endothelin-converting enzyme-like 1 (Ecel1) from Mus musculus (Mouse).